We begin with the raw amino-acid sequence, 198 residues long: Imidazoleglycerol-phosphate dehydratase (198 aa).

Belongs to the imidazoleglycerol-phosphate dehydratase family.

It is found in the cytoplasm. The enzyme catalyses D-erythro-1-(imidazol-4-yl)glycerol 3-phosphate = 3-(imidazol-4-yl)-2-oxopropyl phosphate + H2O. It participates in amino-acid biosynthesis; L-histidine biosynthesis; L-histidine from 5-phospho-alpha-D-ribose 1-diphosphate: step 6/9. The protein is Imidazoleglycerol-phosphate dehydratase of Methylobacillus flagellatus (strain ATCC 51484 / DSM 6875 / VKM B-1610 / KT).